Consider the following 613-residue polypeptide: Dihydroxy-acid dehydratase (613 aa).

D81 provides a ligand contact to Mg(2+). Residue C122 coordinates [2Fe-2S] cluster. Residues D123 and K124 each coordinate Mg(2+). K124 is modified (N6-carboxylysine). C195 is a binding site for [2Fe-2S] cluster. E491 contributes to the Mg(2+) binding site. The Proton acceptor role is filled by S517.

Belongs to the IlvD/Edd family. In terms of assembly, homodimer. It depends on [2Fe-2S] cluster as a cofactor. The cofactor is Mg(2+).

The enzyme catalyses (2R)-2,3-dihydroxy-3-methylbutanoate = 3-methyl-2-oxobutanoate + H2O. The catalysed reaction is (2R,3R)-2,3-dihydroxy-3-methylpentanoate = (S)-3-methyl-2-oxopentanoate + H2O. Its pathway is amino-acid biosynthesis; L-isoleucine biosynthesis; L-isoleucine from 2-oxobutanoate: step 3/4. It functions in the pathway amino-acid biosynthesis; L-valine biosynthesis; L-valine from pyruvate: step 3/4. In terms of biological role, functions in the biosynthesis of branched-chain amino acids. Catalyzes the dehydration of (2R,3R)-2,3-dihydroxy-3-methylpentanoate (2,3-dihydroxy-3-methylvalerate) into 2-oxo-3-methylpentanoate (2-oxo-3-methylvalerate) and of (2R)-2,3-dihydroxy-3-methylbutanoate (2,3-dihydroxyisovalerate) into 2-oxo-3-methylbutanoate (2-oxoisovalerate), the penultimate precursor to L-isoleucine and L-valine, respectively. This is Dihydroxy-acid dehydratase from Aeromonas salmonicida (strain A449).